A 574-amino-acid polypeptide reads, in one-letter code: Kelch-like protein 35 (574 aa).

One can recognise a BTB domain in the interval 40–110; sequence TDVVLRAGGR…VYGAGVRLRA (71 aa). The BACK domain maps to 146 to 248; that stretch reads SLALRRVAAA…APAYFLEKVE (103 aa). Kelch repeat units follow at residues 292–341, 343–385, 386–432, 434–480, 481–522, and 524–570; these read VIVV…ALRN, IYVS…ALQG, QLFA…PCAG, LYVI…SLED, TIYV…VCDG, and VHIL…TIVQ.

This is Kelch-like protein 35 (Klhl35) from Mus musculus (Mouse).